A 276-amino-acid polypeptide reads, in one-letter code: Diaminopimelate epimerase (276 aa).

The substrate site is built by N13, Q46, and N66. C75 serves as the catalytic Proton donor. Residues 76–77, N159, N192, and 210–211 contribute to the substrate site; these read GN and ER. The active-site Proton acceptor is the C219. 220-221 contacts substrate; that stretch reads GT.

Belongs to the diaminopimelate epimerase family. In terms of assembly, homodimer.

The protein resides in the cytoplasm. It carries out the reaction (2S,6S)-2,6-diaminopimelate = meso-2,6-diaminopimelate. Its pathway is amino-acid biosynthesis; L-lysine biosynthesis via DAP pathway; DL-2,6-diaminopimelate from LL-2,6-diaminopimelate: step 1/1. Its function is as follows. Catalyzes the stereoinversion of LL-2,6-diaminopimelate (L,L-DAP) to meso-diaminopimelate (meso-DAP), a precursor of L-lysine and an essential component of the bacterial peptidoglycan. The polypeptide is Diaminopimelate epimerase (Teredinibacter turnerae (strain ATCC 39867 / T7901)).